The sequence spans 383 residues: Histidine decarboxylase (383 aa).

His120 serves as a coordination point for substrate. Lys233 carries the post-translational modification N6-(pyridoxal phosphate)lysine.

The protein belongs to the group II decarboxylase family. As to quaternary structure, homotetramer. It depends on pyridoxal 5'-phosphate as a cofactor.

The enzyme catalyses L-histidine + H(+) = histamine + CO2. The chain is Histidine decarboxylase from Acinetobacter baumannii (strain AB307-0294).